Consider the following 432-residue polypeptide: Enolase (432 aa).

Glutamine 163 is a (2R)-2-phosphoglycerate binding site. Glutamate 205 acts as the Proton donor in catalysis. Mg(2+) is bound by residues aspartate 242, glutamate 289, and aspartate 316. 4 residues coordinate (2R)-2-phosphoglycerate: lysine 341, arginine 370, serine 371, and lysine 392. Catalysis depends on lysine 341, which acts as the Proton acceptor.

This sequence belongs to the enolase family. Requires Mg(2+) as cofactor. In terms of processing, probably phosphorylated.

The protein resides in the cytoplasm. Its subcellular location is the secreted. The protein localises to the cell surface. The enzyme catalyses (2R)-2-phosphoglycerate = phosphoenolpyruvate + H2O. It participates in carbohydrate degradation; glycolysis; pyruvate from D-glyceraldehyde 3-phosphate: step 4/5. In terms of biological role, catalyzes the reversible conversion of 2-phosphoglycerate (2-PG) into phosphoenolpyruvate (PEP). It is essential for the degradation of carbohydrates via glycolysis. Its function is as follows. 'Moonlights' as a plasminogen receptor. Binds plasminogen and human salivary mucin MG2 when expressed on the bacterial cell surface, potentially allowing the bacterium to acquire surface-associated proteolytic activity that may help the dissemination through oral tissues and entrance into the blood stream. The sequence is that of Enolase from Streptococcus mutans serotype c (strain ATCC 700610 / UA159).